Reading from the N-terminus, the 81-residue chain is Short neurotoxin D (81 aa).

The N-terminal stretch at 1-21 (MKTLLLTLVVVTIVCLDLGYT) is a signal peptide. Intrachain disulfides connect cysteine 24–cysteine 43, cysteine 38–cysteine 60, cysteine 62–cysteine 73, and cysteine 74–cysteine 79.

Belongs to the three-finger toxin family. Short-chain subfamily. Type I alpha-neurotoxin sub-subfamily. In terms of tissue distribution, expressed by the venom gland.

The protein localises to the secreted. Functionally, binds to muscle nicotinic acetylcholine receptor (nAChR) and inhibit acetylcholine from binding to the receptor, thereby impairing neuromuscular transmission. This is Short neurotoxin D from Aipysurus laevis (Olive sea snake).